Here is a 261-residue protein sequence, read N- to C-terminus: Protein FAM78B (261 aa).

This sequence belongs to the FAM78 family.

This chain is Protein FAM78B (FAM78B), found in Homo sapiens (Human).